An 84-amino-acid polypeptide reads, in one-letter code: ORF8b protein (84 aa).

Residues 1–82 (MCLKILVRYN…RDVLVVLNKR (82 aa)) form the SARS ORF8 Ig-like domain. A disulfide bridge connects residues C22 and C40.

It is found in the host cytoplasm. The protein localises to the host nucleus. Functionally, non-structural protein which is dispensable for virus replication in cell culture. The sequence is that of ORF8b protein from Severe acute respiratory syndrome coronavirus (SARS-CoV).